The primary structure comprises 601 residues: MDSRRRSPTVTAKAAAGELPLAPHEGQNQQPSIPRSSDVLPLPLYLANGVFFTLFFSVMYFLLTRWREKIRNATPLHVVTLSELAALASLIASVIYLVSFFGLDFVQSLIYKPNNEGWEIEEEILMVEDSRNGTNCTTLGCAVPPPSVPKIAPVVPQQPSKMVIIEKPAPLITPQNSEEDEDIIKAVVAGKIPSYSLESKLGDCKRAAGIRREALQRITGKSLEGLPLEGFDYASILGQCCEMPVGYVQLPVGIAGPLLLDGREYMLPMATTEGCLVASTNRGCKAILASGGANSVLLRDGMTRAPVVRFGTAKRAAELKFYMEDTQNFETISVVFNKSSRFAKLQSVQCAIAGKNLYIRFSCSTGDAMGMNMVSKGVQNVLEFLQTDYPDMDVLGISGNFCADKKPAAVNWIEGRGKSVVCEAIIKEEIVKTVLKTEVAALIELNMVKNLAGSAIAGALGGFNAHASNIVSAIFIATGQDPAQNVESSQCITMMEAVNDGKDLHISVTMPSIEVGTVGGGTQLASQSACLNLLGVKGASKDSPGANSRLLATIVAGSVLAGELSLMSAISAGQLVRSHMKYNRSSKDITNIASSQLESDS.

The segment at 1-34 (MDSRRRSPTVTAKAAAGELPLAPHEGQNQQPSIP) is disordered. The next 2 helical transmembrane spans lie at 36-58 (SSDVLPLPLYLANGVFFTLFFSV) and 86-106 (ALASLIASVIYLVSFFGLDFV). The linker stretch occupies residues 107 to 179 (QSLIYKPNNE…PLITPQNSEE (73 aa)). Residues 180-601 (DEDIIKAVVA…IASSQLESDS (422 aa)) form a catalytic region. Glu273 acts as the Charge relay system in catalysis. Asn337 is a glycosylation site (N-linked (GlcNAc...) asparagine). Active-site charge relay system residues include Lys405 and Asp481. His579 acts as the Proton donor in catalysis. Residue Asn583 is glycosylated (N-linked (GlcNAc...) asparagine).

Belongs to the HMG-CoA reductase family.

The protein resides in the endoplasmic reticulum membrane. The catalysed reaction is (R)-mevalonate + 2 NADP(+) + CoA = (3S)-3-hydroxy-3-methylglutaryl-CoA + 2 NADPH + 2 H(+). The protein operates within metabolic intermediate biosynthesis; (R)-mevalonate biosynthesis; (R)-mevalonate from acetyl-CoA: step 3/3. In terms of biological role, catalyzes the synthesis of mevalonate. The specific precursor of all isoprenoid compounds present in plants. This is 3-hydroxy-3-methylglutaryl-coenzyme A reductase (HMGR) from Catharanthus roseus (Madagascar periwinkle).